Consider the following 43-residue polypeptide: Protein PsbN (43 aa).

The helical transmembrane segment at 5 to 27 (NLVTISISCLLVSLTGYAIYTSF) threads the bilayer.

This sequence belongs to the PsbN family.

It localises to the plastid. It is found in the chloroplast thylakoid membrane. May play a role in photosystem I and II biogenesis. The protein is Protein PsbN of Gnetum gnemon (Spanish joint-fir).